The primary structure comprises 588 residues: Adenine deaminase (588 aa).

This sequence belongs to the metallo-dependent hydrolases superfamily. Adenine deaminase family. Homodimer. The cofactor is Mn(2+).

It catalyses the reaction adenine + H2O + H(+) = hypoxanthine + NH4(+). This is Adenine deaminase from Escherichia coli (strain 55989 / EAEC).